A 131-amino-acid chain; its full sequence is Cytochrome c-552 (131 aa).

Positions 11, 14, 15, and 69 each coordinate heme c.

Binds 1 heme c group covalently per subunit.

Its function is as follows. This monoheme basic protein appears to function as an electron donor to cytochrome oxidase in T.thermophilus. In Thermus thermophilus, this protein is Cytochrome c-552 (cycA).